We begin with the raw amino-acid sequence, 548 residues long: ATP synthase subunit alpha, mitochondrial (548 aa).

ATP is bound at residue 209–216; that stretch reads GDRQTGKT.

The protein belongs to the ATPase alpha/beta chains family. In terms of assembly, F-type ATPases have 2 components, CF(1) - the catalytic core - and CF(0) - the membrane proton channel. CF(1) has five subunits: alpha(3), beta(3), gamma(1), delta(1), epsilon(1). CF(0) has three main subunits: a, b and c.

It is found in the mitochondrion. The protein resides in the mitochondrion inner membrane. Functionally, mitochondrial membrane ATP synthase (F(1)F(0) ATP synthase or Complex V) produces ATP from ADP in the presence of a proton gradient across the membrane which is generated by electron transport complexes of the respiratory chain. F-type ATPases consist of two structural domains, F(1) - containing the extramembraneous catalytic core, and F(0) - containing the membrane proton channel, linked together by a central stalk and a peripheral stalk. During catalysis, ATP synthesis in the catalytic domain of F(1) is coupled via a rotary mechanism of the central stalk subunits to proton translocation. Subunits alpha and beta form the catalytic core in F(1). Rotation of the central stalk against the surrounding alpha(3)beta(3) subunits leads to hydrolysis of ATP in three separate catalytic sites on the beta subunits. Subunit alpha does not bear the catalytic high-affinity ATP-binding sites. This is ATP synthase subunit alpha, mitochondrial (ATP1) from Kluyveromyces lactis (strain ATCC 8585 / CBS 2359 / DSM 70799 / NBRC 1267 / NRRL Y-1140 / WM37) (Yeast).